The following is a 178-amino-acid chain: Thymidine kinase (178 aa).

Position 13-20 (13-20) interacts with ATP; that stretch reads GPMFAGKS. The active-site Proton acceptor is Glu85. A substrate-binding site is contributed by Phe115. 2 residues coordinate Zn(2+): Cys140 and Cys143. Residue 159 to 163 coordinates substrate; sequence IEIIG. Residues Cys172 and Cys175 each coordinate Zn(2+).

The protein belongs to the thymidine kinase family.

It carries out the reaction thymidine + ATP = dTMP + ADP + H(+). This is Thymidine kinase (TK) from Myxoma virus (strain Lausanne) (MYXV).